A 235-amino-acid polypeptide reads, in one-letter code: 1-(5-phosphoribosyl)-5-[(5-phosphoribosylamino)methylideneamino] imidazole-4-carboxamide isomerase (235 aa).

The Proton acceptor role is filled by D8. D128 serves as the catalytic Proton donor.

Belongs to the HisA/HisF family.

The protein localises to the cytoplasm. The catalysed reaction is 1-(5-phospho-beta-D-ribosyl)-5-[(5-phospho-beta-D-ribosylamino)methylideneamino]imidazole-4-carboxamide = 5-[(5-phospho-1-deoxy-D-ribulos-1-ylimino)methylamino]-1-(5-phospho-beta-D-ribosyl)imidazole-4-carboxamide. The protein operates within amino-acid biosynthesis; L-histidine biosynthesis; L-histidine from 5-phospho-alpha-D-ribose 1-diphosphate: step 4/9. The protein is 1-(5-phosphoribosyl)-5-[(5-phosphoribosylamino)methylideneamino] imidazole-4-carboxamide isomerase of Thermus thermophilus (strain ATCC BAA-163 / DSM 7039 / HB27).